Consider the following 201-residue polypeptide: Phospholipase A2 inhibitor NAI (201 aa).

The first 19 residues, 1 to 19 (MKSLQIICLLFVLVARGSC), serve as a signal peptide directing secretion. Intrachain disulfides connect Cys-22/Cys-47, Cys-25/Cys-32, Cys-40/Cys-68, Cys-74/Cys-95, Cys-96/Cys-101, Cys-119/Cys-144, Cys-137/Cys-166, and Cys-170/Cys-191. Residue Asn-176 is glycosylated (N-linked (GlcNAc...) asparagine).

This sequence belongs to the CNF-like-inhibitor family. Heterotrimer of 2 subunits A and 1 subunit B; non-covalently linked. N-glycosylated, probably by biantennary structure. Glycosylation does not change PLA2 inhibitory activity. Expressed by the liver.

It localises to the secreted. Inhibits the enzymatic activity of all phospholipase A2 tested, binding them with micromole to nanomole affinity. The polypeptide is Phospholipase A2 inhibitor NAI (Notechis ater (Black tiger snake)).